The following is a 356-amino-acid chain: Peptide chain release factor 1 (356 aa).

An N5-methylglutamine modification is found at glutamine 233.

The protein belongs to the prokaryotic/mitochondrial release factor family. In terms of processing, methylated by PrmC. Methylation increases the termination efficiency of RF1.

It localises to the cytoplasm. Peptide chain release factor 1 directs the termination of translation in response to the peptide chain termination codons UAG and UAA. The chain is Peptide chain release factor 1 from Endomicrobium trichonymphae.